A 219-amino-acid polypeptide reads, in one-letter code: Octanoyltransferase (219 aa).

In terms of domain architecture, BPL/LPL catalytic spans 31–206 (TASADEIWLV…ECLRLMKASA (176 aa)). Residues 70 to 77 (RGGQVTFH), 137 to 139 (SLG), and 150 to 152 (GLA) each bind substrate. The active-site Acyl-thioester intermediate is Cys168.

The protein belongs to the LipB family.

It localises to the cytoplasm. It carries out the reaction octanoyl-[ACP] + L-lysyl-[protein] = N(6)-octanoyl-L-lysyl-[protein] + holo-[ACP] + H(+). It participates in protein modification; protein lipoylation via endogenous pathway; protein N(6)-(lipoyl)lysine from octanoyl-[acyl-carrier-protein]: step 1/2. Catalyzes the transfer of endogenously produced octanoic acid from octanoyl-acyl-carrier-protein onto the lipoyl domains of lipoate-dependent enzymes. Lipoyl-ACP can also act as a substrate although octanoyl-ACP is likely to be the physiological substrate. This Sodalis glossinidius (strain morsitans) protein is Octanoyltransferase.